The chain runs to 294 residues: Flagellin B1 (294 aa).

The propeptide occupies 1 to 8; that stretch reads MKTRTRKG.

This sequence belongs to the archaeal flagellin family.

It is found in the archaeal flagellum. Functionally, flagellin is the subunit protein which polymerizes to form the filaments of archaeal flagella. The polypeptide is Flagellin B1 (flaB1) (Thermococcus kodakarensis (strain ATCC BAA-918 / JCM 12380 / KOD1) (Pyrococcus kodakaraensis (strain KOD1))).